Consider the following 325-residue polypeptide: NADH-ubiquinone oxidoreductase chain 1 (325 aa).

8 helical membrane-spanning segments follow: residues 5–25, 40–60, 79–99, 105–125, 151–171, 177–197, 237–257, and 263–283; these read VPAEILCLILPLLLGVAFLVL, PDVVGSFGLLQPLADGLKLIL, VATFMLSLVAWAVVPFDYGMV, IGLLYLFAISSLGVYGIIIAG, IGLILITVLICVGSCNLSEIV, IWFGIPLFPVLVMFFISCLAE, ILMSGLCTLLFLGGWLPILDL, and IPCSIWFSIKVLLFLFLYIWV.

This sequence belongs to the complex I subunit 1 family.

It localises to the mitochondrion inner membrane. The enzyme catalyses a ubiquinone + NADH + 5 H(+)(in) = a ubiquinol + NAD(+) + 4 H(+)(out). Core subunit of the mitochondrial membrane respiratory chain NADH dehydrogenase (Complex I) that is believed to belong to the minimal assembly required for catalysis. Complex I functions in the transfer of electrons from NADH to the respiratory chain. The immediate electron acceptor for the enzyme is believed to be ubiquinone. In Triticum aestivum (Wheat), this protein is NADH-ubiquinone oxidoreductase chain 1 (ND1).